Consider the following 284-residue polypeptide: HTH-type transcriptional activator RhaR (284 aa).

One can recognise an HTH araC/xylS-type domain in the interval 181–279 (DMLMNALRAS…GVSPSAYRQR (99 aa)). DNA-binding regions (H-T-H motif) lie at residues 198 to 219 (EAFC…KEQT) and 246 to 269 (IGDV…HQAF).

As to quaternary structure, binds DNA as a dimer.

The protein localises to the cytoplasm. Its function is as follows. Activates expression of the rhaSR operon in response to L-rhamnose. This is HTH-type transcriptional activator RhaR from Pectobacterium atrosepticum (strain SCRI 1043 / ATCC BAA-672) (Erwinia carotovora subsp. atroseptica).